We begin with the raw amino-acid sequence, 448 residues long: Beclin-1 (448 aa).

Met1 is subject to N-acetylmethionine. Ser14 and Ser29 each carry phosphoserine. 3 positions are modified to phosphoserine; by AMPK: Ser88, Ser91, and Ser94. Residues 106-125 (TMENLSRRLKVTGDLFDIMS) carry the BH3 motif. Residues 110-157 (LSRRLKVTGDLFDIMSGQTDVDHPLCEECTDTLLDQLDTQLNVTENEC) form an interaction with BCL2 and BCL2L1 region. Thr117 is modified (phosphothreonine; by DAPK1). The stretch at 140–267 (DTLLDQLDTQ…QLDKLKKTNV (128 aa)) forms a coiled coil. The evolutionary conserved domain (ECD) stretch occupies residues 243-448 (DELKSVENQM…AWVSSQFYNK (206 aa)). Residues Lys400 and Lys435 each participate in a glycyl lysine isopeptide (Lys-Gly) (interchain with G-Cter in ubiquitin) cross-link. The tract at residues 423 to 448 (WTKALKFMLTNLKWGLAWVSSQFYNK) is required for membrane-association.

It belongs to the beclin family. In terms of assembly, a homodimeric form is proposed to exist; this metastable form readily transits to ATG14- or UVRAG-containing complexes with BECN1:UVRAG being more stable than BECN1:ATG14. Component of the PI3K (PI3KC3/PI3K-III/class III phosphatidylinositol 3-kinase) complex the core of which is composed of the catalytic subunit PIK3C3, the regulatory subunit PIK3R4 and BECN1 associating with additional regulatory/auxiliary subunits to form alternative complex forms. Alternative complex forms containing a fourth regulatory subunit in a mutually exclusive manner are PI3K complex I (PI3KC3-C1) containing ATG14, and PI3K complex II (PI3KC3-C2) containing UVRAG. PI3KC3-C1 displays a V-shaped architecture with PIK3R4 serving as a bridge between PIK3C3 and the ATG14:BECN1 subcomplex. Both, PI3KC3-C1 and PI3KC3-C2, can associate with further regulatory subunits, such as RUBCN, SH3GLB1/Bif-1 and AMBRA1. PI3KC3-C1 probably associates with PIK3CB. Forms a complex with PPP2CA and AMBRA1; AMBRA1 and BECN1 components of the complex regulate MYC stability via different pathways. Component of the complex, at least composed of LRPPRC, BECN1 and BCL2; the interactions prevent BECN1 from forming an autophagy-inducing complex with PIK3C3. Interacts with AMBRA1, GOPC, GRID2. Interacts with BCL2 and BCL2L1 isoform Bcl-X(L); the interaction inhibits BECN1 function in promoting autophagy by interfering with the formation of the PI3K complex. Interacts with cytosolic HMGB1; inhibits the interaction of BECN1 and BCL2 leading to promotion of autophagy. Interacts with USP10, USP13, VMP1, DAPK1, RAB39A. Interacts with the poly-Gln domain of ATXN3; the interaction causes deubiquitination at Lys-400 and stabilizes BECN1. Interacts with SLAMF1. Interacts with TRIM5; the interaction causes activation of BECN1 by causing its dissociation from its inhibitors BCL2 and TAB2. Interacts with active ULK1 (phosphorylated on 'Ser-317') and MEFV simultaneously. Interacts with WDR81 and WDR91; negatively regulates the PI3 kinase/PI3K activity associated with endosomal membranes. Interacts with LAPTM4B; competes with EGFR for LAPTM4B binding; regulates EGFR activity. Interacts with TRIM50. Interacts with TRIM16. Interacts with ATG14; this interaction is increased in the absence of TMEM39A. Interacts with WASHC1; preventing interaction with AMBRA1 and the DCX(AMBRA1) complex and subsequent ubiquitination. Interacts with TRIM17. Interacts with BCL2L10/BCL-B (via BH1 domain). Interacts with SH3BGRL. Interacts with IRGM; enhancing BECN1-interacting partners and influencing the composition of the BECN1 complex. Interacts with ARMC3. Interacts with LRPPRC. As to quaternary structure, (Microbial infection) Interacts with African swine fever virus (ASFV) apoptosis regulator Bcl-2 homolog; this interaction allows the virus to inhibit BECN1, and thus autophagy. Post-translationally, phosphorylation at Thr-117 by DAPK1 reduces its interaction with BCL2 and BCL2L1 and promotes induction of autophagy. In response to autophagic stimuli, phosphorylated at serine residues by AMPK in an ATG14-dependent manner, and this phosphorylation is critical for maximally efficient autophagy. In terms of processing, polyubiquitinated by NEDD4, both with 'Lys-11'- and 'Lys-63'-linkages. 'Lys-11'-linked polyubiquitination leads to degradation and is enhanced when the stabilizing interaction partner VPS34 is depleted. Deubiquitinated by USP10 and USP13, leading to stabilize the PIK3C3/VPS34-containing complexes. Polyubiquitinated at Lys-400 with 'Lys-48'-linkages. 'Lys-48'-linked polyubiquitination of Lys-400 leads to degradation. Deubiquitinated by ATXN3, leading to stabilization. Ubiquitinated at Lys-435 via 'Lys-63'-linkage by the DCX(AMBRA1) complex, thereby increasing the association between BECN1 and PIK3C3 to promote PIK3C3 activity. 'Lys-48'-linked ubiquitination by RNF216 leads to proteasomal degradation and autophagy inhibition. Proteolytically processed by caspases including CASP8 and CASP3; the C-terminal fragments lack autophagy-inducing capacity and are proposed to induce apoptosis. Thus the cleavage is proposed to be an determinant to switch from autophagy to apoptosis pathways affecting cellular homeostasis including viral infections and survival of tumor cells.

The protein localises to the cytoplasm. It is found in the golgi apparatus. The protein resides in the trans-Golgi network membrane. It localises to the endosome membrane. Its subcellular location is the endoplasmic reticulum membrane. The protein localises to the mitochondrion membrane. It is found in the cytoplasmic vesicle. The protein resides in the autophagosome. It localises to the mitochondrion. Its subcellular location is the nucleus. Its function is as follows. Plays a central role in autophagy. Acts as a core subunit of the PI3K complex that mediates formation of phosphatidylinositol 3-phosphate; different complex forms are believed to play a role in multiple membrane trafficking pathways: PI3KC3-C1 is involved in initiation of autophagosomes and PI3KC3-C2 in maturation of autophagosomes and endocytosis. Involved in regulation of degradative endocytic trafficking and required for the abscission step in cytokinesis, probably in the context of PI3KC3-C2. Essential for the formation of PI3KC3-C2 but not PI3KC3-C1 PI3K complex forms. Involved in endocytosis. May play a role in antiviral host defense. In terms of biological role, beclin-1-C 35 kDa localized to mitochondria can promote apoptosis; it induces the mitochondrial translocation of BAX and the release of proapoptotic factors. The polypeptide is Beclin-1 (BECN1) (Sus scrofa (Pig)).